A 526-amino-acid polypeptide reads, in one-letter code: Zinc finger protein Helios (526 aa).

The tract at residues 28 to 94 (DLTSSTPNGQ…IESSEVADNR (67 aa)) is disordered. The segment covering 29–50 (LTSSTPNGQHASPSHMTSTNSV) has biased composition (polar residues). S56 carries the phosphoserine modification. Residues 61 to 77 (DRQPLSREDEIRGHDEG) are compositionally biased toward basic and acidic residues. 2 positions are modified to phosphoserine: S78 and S79. K95 participates in a covalent cross-link: Glycyl lysine isopeptide (Lys-Gly) (interchain with G-Cter in SUMO2). 4 consecutive C2H2-type zinc fingers follow at residues 112–134 (LKCDVCGMVCIGPNVLMVHKRSH), 140–162 (FHCNQCGASFTQKGNLLRHIKLH), 168–190 (FKCPFCSYACRRRDALTGHLRTH), and 196–219 (HKCNYCGRSYKQRSSLEEHKERCH). Residue K288 is modified to N6-acetyllysine. Residues 368–379 (ISRETSDSHENN) are compositionally biased toward basic and acidic residues. Positions 368–435 (ISRETSDSHE…LNPKRKQSPA (68 aa)) are disordered. Residues K442 and K448 each participate in a glycyl lysine isopeptide (Lys-Gly) (interchain with G-Cter in SUMO2) cross-link. 2 C2H2-type zinc fingers span residues 471–493 (FKCEHCRVLFLDHVMYTIHMGCH) and 499–523 (LECNICGYRSQDRYEFSSHIVRGEH).

The protein belongs to the Ikaros C2H2-type zinc-finger protein family. Can form homodimers. Interacts with IKZF4 and IKZF5. Expressed in outer hair cells (OHC) of the organ of Corti. Abundant in thymus, low expression in bone marrow and brain and no detectable expression in spleen, liver, kidney or muscle. Expressed in T-cells.

It is found in the nucleus. In terms of biological role, transcriptional regulator required for outer hair cells (OHC) maturation and, consequently, for hearing. The chain is Zinc finger protein Helios (Ikzf2) from Mus musculus (Mouse).